Here is a 1977-residue protein sequence, read N- to C-terminus: Voltage-dependent L-type calcium channel subunit alpha-1F (1977 aa).

The span at 1-11 (MSESEGGKDTT) shows a compositional bias: basic and acidic residues. Positions 1-60 (MSESEGGKDTTPEPSPANGAGPGPEWGLCPGPPAVEGESSGASGLGTPKRRNQHSKHKTV) are disordered. Over 1–92 (MSESEGGKDT…RSCISIVEWK (92 aa)) the chain is Cytoplasmic. The segment covering 48 to 59 (PKRRNQHSKHKT) has biased composition (basic residues). The stretch at 79–375 (NPLRRSCISI…LVLGVLSGEF (297 aa)) is one I repeat. Residues 93–111 (PFDILILLTIFANCVALGV) traverse the membrane as a helical segment. The Extracellular portion of the chain corresponds to 112-129 (YIPFPEDDSNTANHNLEQ). The helical transmembrane segment at 130 to 149 (VEYVFLVIFTVETVLKIVAY) threads the bilayer. The Cytoplasmic portion of the chain corresponds to 150–161 (GLVLHPSAYIRN). A helical membrane pass occupies residues 162-180 (GWNLLDFIIVVVGLFSVLL). Topologically, residues 181–201 (EQGPGRPGDAPHTGGKPGGFD) are extracellular. Residues 202–220 (VKALRAFRVLRPLRLVSGV) form a helical membrane-spanning segment. The Cytoplasmic segment spans residues 221–239 (PSLHIVLNSIMKALVPLLH). Residues 240-259 (IALLVLFVIIIYAIIGLELF) traverse the membrane as a helical segment. Over 260–347 (LGRMHKTCYF…WMQDAMGYEL (88 aa)) the chain is Extracellular. Asparagine 295 is a glycosylation site (N-linked (GlcNAc...) asparagine). Glutamate 330 serves as a coordination point for Ca(2+). The chain crosses the membrane as a helical span at residues 348–372 (PWVYFVSLVIFGSFFVLNLVLGVLS). The Cytoplasmic segment spans residues 373–529 (GEFSKEREKA…ARCRRAVKSN (157 aa)). Positions 395-412 (QQMEEDLRGYLDWITQAE) are binding to the beta subunit. Disordered stretches follow at residues 418–441 (DPSA…PQLA) and 455–488 (SHST…EDEE). The segment covering 455-469 (SHSTRSTHSTSSHAS) has biased composition (low complexity). An II repeat occupies 515–761 (NRVLRARCRR…VFLAIAVDNL (247 aa)). The chain crosses the membrane as a helical span at residues 530–549 (ACYWAVLLLVFLNTLTIASE). At 550–564 (HHGQPVWLTQIQEYA) the chain is on the extracellular side. The chain crosses the membrane as a helical span at residues 565–583 (NKVLLCLFTVEMLLKLYGL). At 584-591 (GPSAYVSS) the chain is on the cytoplasmic side. Residues 592–610 (FFNRFDCFVVCGGILETTL) form a helical membrane-spanning segment. Over 611 to 620 (VEVGAMQPLG) the chain is Extracellular. The chain crosses the membrane as a helical span at residues 621 to 639 (ISVLRCVRLLRIFKVTRHW). At 640-658 (ASLSNLVASLLNSMKSIAS) the chain is on the cytoplasmic side. The chain crosses the membrane as a helical span at residues 659–679 (LLLLLFLFIIIFSLLGMQLFG). Topologically, residues 680-733 (GKFNFDQTHTKRSTFDTFPQALLTVFQILTGEDWNVVMYDGIMAYGGPFFPGML) are extracellular. Ca(2+) is bound at residue glutamate 711. Residues 734–758 (VCIYFIILFICGNYILLNVFLAIAV) traverse the membrane as a helical segment. Over 759 to 871 (DNLASGDAGT…KGCHTLIHHH (113 aa)) the chain is Cytoplasmic. Residues 767–830 (GTAKDKGGEK…EEEEEGAGGV (64 aa)) form a disordered region. Over residues 768–783 (TAKDKGGEKSNEKDLP) the composition is skewed to basic and acidic residues. Positions 807 to 826 (DMEEEEEEEEEEEEEEEEEG) are enriched in acidic residues. One copy of the III repeat lies at 858 to 1140 (NPLRKGCHTL…IFVGFVIITF (283 aa)). Residues 872 to 890 (VFTNLILVFIILSSVSLAA) form a helical membrane-spanning segment. Residues 891–906 (EDPIRAHSFRNHILGY) lie on the Extracellular side of the membrane. The helical transmembrane segment at 907–926 (FDYAFTSIFTVEILLKMTVF) threads the bilayer. Over 927 to 938 (GAFLHRGSFCRS) the chain is Cytoplasmic. Residues 939–957 (WFNMLDLLVVSVSLISFGI) form a helical membrane-spanning segment. Residues 958 to 963 (HSSAIS) are Extracellular-facing. A helical membrane pass occupies residues 964 to 983 (VVKILRVLRVLRPLRAINRA). Residues 984-1002 (KGLKHVVQCVFVAIRTIGN) lie on the Cytoplasmic side of the membrane. Residues 1003–1022 (IMIVTTLLQFMFACIGVQLF) traverse the membrane as a helical segment. Over 1023-1112 (KGKFYTCTDE…HGPIYNYRVE (90 aa)) the chain is Extracellular. Positions 1060–1150 (RLWVNSDFNF…RAQGEQEYQN (91 aa)) are dihydropyridine binding. Glutamate 1086 lines the Ca(2+) pocket. Residues 1113–1133 (ISVFFIVYIIIIAFFMMNIFV) traverse the membrane as a helical segment. Residues 1134–1190 (GFVIITFRAQGEQEYQNCELDKNQRQCVEYALKAQPLRRYIPKNPHQYRVWATVNSA) are Cytoplasmic-facing. The IV repeat unit spans residues 1177 to 1444 (NPHQYRVWAT…LFVAVIMDNF (268 aa)). A helical transmembrane segment spans residues 1191–1209 (AFEYLMFLLILLNTVALAM). The Extracellular segment spans residues 1210 to 1224 (QHYEQTAPFNYAMDI). The chain crosses the membrane as a helical span at residues 1225 to 1244 (LNMVFTGLFTIEMVLKIIAF). Topologically, residues 1245 to 1251 (KPKHYFT) are cytoplasmic. A helical membrane pass occupies residues 1252–1273 (DAWNTFDALIVVGSIVDIAVTE). The Extracellular segment spans residues 1274–1290 (VNNGGHLGESSEDSSRI). A helical transmembrane segment spans residues 1291 to 1310 (SITFFRLFRVMRLVKLLSKG). Residues 1311-1329 (EGIRTLLWTFIKSFQALPY) are Cytoplasmic-facing. A helical transmembrane segment spans residues 1330-1349 (VALLIAMIFFIYAVIGMQMF). Over 1350 to 1416 (GKVALQDGTQ…GEEFTCGSNF (67 aa)) the chain is Extracellular. The interval 1397–1463 (RCDPESDFGP…LGPHHLDEFK (67 aa)) is dihydropyridine binding. The phenylalkylamine binding stretch occupies residues 1409–1452 (EFTCGSNFAIAYFISFFMLCAFLIINLFVAVIMDNFDYLTRDWS). Residues 1417–1441 (AIAYFISFFMLCAFLIINLFVAVIM) traverse the membrane as a helical segment. The Cytoplasmic segment spans residues 1442-1977 (DNFDYLTRDW…GDEMACVHAL (536 aa)). Disordered regions lie at residues 1637 to 1754 (CDTE…EVPD) and 1816 to 1841 (DLPI…WATP). Acidic residues predominate over residues 1638–1657 (DTEEEEEEGQEGVEEEDEKD). Composition is skewed to polar residues over residues 1661–1670 (NKATMVSQPS), 1702–1716 (TPTS…AGSN), 1733–1743 (GNSQPKGTKGQ), and 1829–1840 (SGPNRAQGSWAT).

This sequence belongs to the calcium channel alpha-1 subunit (TC 1.A.1.11) family. CACNA1F subfamily. In terms of assembly, voltage-dependent calcium channels are multisubunit complexes, consisting of alpha-1, alpha-2, beta and delta subunits in a 1:1:1:1 ratio. The channel activity is directed by the pore-forming and voltage-sensitive alpha-1 subunit. In many cases, this subunit is sufficient to generate voltage-sensitive calcium channel activity. The auxiliary subunits beta and alpha-2/delta linked by a disulfide bridge regulate the channel activity. Interacts (via IQ domain) with CABP4; in a calcium independent manner. Interacts with CABP4; suppresses robust calcium-dependent inactivation of channel without enhancing the hyperpolarized voltage-dependent activation. Expression in skeletal muscle and retina. Isoform 4 is expressed in retina.

The protein resides in the membrane. The enzyme catalyses Ca(2+)(in) = Ca(2+)(out). In terms of biological role, voltage-sensitive calcium channels (VSCC) mediate the entry of calcium ions into excitable cells and are also involved in a variety of calcium-dependent processes, including muscle contraction, hormone or neurotransmitter release, gene expression, cell motility, cell division and cell death. The isoform alpha-1F gives rise to L-type calcium currents. Long-lasting (L-type) calcium channels belong to the 'high-voltage activated' (HVA) group. They are blocked by dihydropyridines (DHP), phenylalkylamines, and by benzothiazepines. Activates at more negative voltages and does not undergo calcium-dependent inactivation (CDI), due to incoming calcium ions, during depolarization. Its function is as follows. Voltage-dependent L-type calcium channel activates at more hyperpolarized voltages and exhibits a robust calcium-dependent inactivation (CDI), due to incoming calcium ions, during depolarizations. Functionally, voltage-sensitive calcium channels (VSCC) mediate the entry of calcium ions into excitable cells and are also involved in a variety of calcium-dependent processes, including muscle contraction, hormone or neurotransmitter release, gene expression, cell motility, cell division and cell death. This chain is Voltage-dependent L-type calcium channel subunit alpha-1F, found in Homo sapiens (Human).